The primary structure comprises 980 residues: Chitin binding domain containing chtb-2 (980 aa).

An N-terminal signal peptide occupies residues 1 to 20 (MRTMHCFLFILLFCLGQVFT). Asparagine 187 and asparagine 190 each carry an N-linked (GlcNAc...) asparagine glycan. Disordered regions lie at residues 310-354 (ERQQ…AELD), 431-451 (QEEE…QIRQ), and 486-512 (EILR…QQEA). Residues asparagine 941 and asparagine 975 are each glycosylated (N-linked (GlcNAc...) asparagine).

The chain is Chitin binding domain containing chtb-2 from Caenorhabditis elegans.